A 316-amino-acid chain; its full sequence is Pantothenate kinase (316 aa).

Residue 95-102 (GSVAVGKS) participates in ATP binding.

It belongs to the prokaryotic pantothenate kinase family.

The protein localises to the cytoplasm. The enzyme catalyses (R)-pantothenate + ATP = (R)-4'-phosphopantothenate + ADP + H(+). Its pathway is cofactor biosynthesis; coenzyme A biosynthesis; CoA from (R)-pantothenate: step 1/5. The chain is Pantothenate kinase from Shigella sonnei (strain Ss046).